Consider the following 270-residue polypeptide: Phosphonates import ATP-binding protein PhnC (270 aa).

One can recognise an ABC transporter domain in the interval 2–245 (LVIEGLTCRF…IARELYDLEA (244 aa)). An ATP-binding site is contributed by 34 to 41 (GRSGAGKS).

Belongs to the ABC transporter superfamily. Phosphonates importer (TC 3.A.1.9.1) family. In terms of assembly, the complex is composed of two ATP-binding proteins (PhnC), two transmembrane proteins (PhnE) and a solute-binding protein (PhnD).

The protein localises to the cell inner membrane. The enzyme catalyses phosphonate(out) + ATP + H2O = phosphonate(in) + ADP + phosphate + H(+). Part of the ABC transporter complex PhnCDE involved in phosphonates import. Responsible for energy coupling to the transport system. The sequence is that of Phosphonates import ATP-binding protein PhnC from Rhodopseudomonas palustris (strain BisB5).